The chain runs to 207 residues: Probable mediator of RNA polymerase II transcription subunit 19b (207 aa).

The disordered stretch occupies residues Asp99–Met207. Positions Asp127–Asp152 are enriched in basic residues. Residues Arg153 to Lys167 are compositionally biased toward basic and acidic residues. Residues Glu168–Asn179 are compositionally biased toward basic residues.

This sequence belongs to the plant Mediator complex subunit 19 family. Component of the Mediator complex.

Its subcellular location is the nucleus. Component of the Mediator complex, a coactivator involved in the regulated transcription of nearly all RNA polymerase II-dependent genes. Mediator functions as a bridge to convey information from gene-specific regulatory proteins to the basal RNA polymerase II transcription machinery. The Mediator complex, having a compact conformation in its free form, is recruited to promoters by direct interactions with regulatory proteins and serves for the assembly of a functional preinitiation complex with RNA polymerase II and the general transcription factors. The sequence is that of Probable mediator of RNA polymerase II transcription subunit 19b (MED19B) from Arabidopsis thaliana (Mouse-ear cress).